Here is a 508-residue protein sequence, read N- to C-terminus: CXXC-type zinc finger protein 1 (508 aa).

The CXXC-type zinc-finger motif lies at 10-47; sequence EDVWKERCMNCIRCNDEKNCGTCWPCRNGKTCDMRKCF. Disordered regions lie at residues 95–156 and 453–508; these read QQVE…EPDK and KSQS…TQNN. Composition is skewed to low complexity over residues 113–123 and 454–481; these read AAAAAQQRKAN and SQST…SSSS.

In terms of assembly, component of the SET2 complex (also known as the SET1/COMPASS complex), which contains at least set-2, swd-2.1, cfp-1, rbbp-5, wdr-5.1, dpy-30 and ash-2. Within the complex, interacts with wdr-5.1, ash-2 and dpy-30. Also interacts with the SIN3S complex, which contains at least sin-3, hda-1, athp-1 and mrg-1. Interacts with sin-3, hda-1 and mrg-1.

The protein localises to the nucleus. In terms of biological role, transcriptional activator that exhibits a unique DNA binding specificity for CpG motifs; enriched at promoters containing the trimethylation mark on histone H3 'Lys-4' (H3K4me3). Forms part of the SET2 complex and interacts with the SIN3S HDAC complex at promoters. Required for H3K4 trimethylation and plays a repressive role in the expression of heat shock and salt-inducible genes. Required for fertility, in cooperation with class I histone deacetylases (HDACs). The polypeptide is CXXC-type zinc finger protein 1 (Caenorhabditis elegans).